The sequence spans 426 residues: Na(+)/H(+) antiporter 1 (426 aa).

The next 12 helical transmembrane spans lie at 1–21 (MELM…SLVA), 29–49 (IPDI…LQII), 57–77 (IFEY…AFTM), 95–115 (ITFL…LNLP), 120–140 (VGYL…IPVF), 158–178 (IFND…FGLF), 184–204 (LIDL…LAKI), 208–228 (IIIH…GAML), 236–256 (LLPS…IMGL), 286–306 (VFIF…NYFI), 309–329 (LLVA…LGLI), and 382–402 (IAGT…ILEA).

This sequence belongs to the monovalent cation:proton antiporter 1 (CPA1) transporter (TC 2.A.36) family.

The protein resides in the cell membrane. This is a Na(+)/H(+) antiporter. Can also transport lithium. The sequence is that of Na(+)/H(+) antiporter 1 from Methanocaldococcus jannaschii (strain ATCC 43067 / DSM 2661 / JAL-1 / JCM 10045 / NBRC 100440) (Methanococcus jannaschii).